Reading from the N-terminus, the 120-residue chain is NADH-ubiquinone oxidoreductase chain 3 (120 aa).

Transmembrane regions (helical) follow at residues 7–27 (FVYILVLLAISTGLSVILFFL), 62–82 (FYLVAILFLIFDLEITFLFPF), and 89–109 (MTLLSYSLMLIFLIILTIGFI).

It belongs to the complex I subunit 3 family.

It is found in the mitochondrion membrane. It carries out the reaction a ubiquinone + NADH + 5 H(+)(in) = a ubiquinol + NAD(+) + 4 H(+)(out). Its function is as follows. Core subunit of the mitochondrial membrane respiratory chain NADH dehydrogenase (Complex I) that is believed to belong to the minimal assembly required for catalysis. Complex I functions in the transfer of electrons from NADH to the respiratory chain. The immediate electron acceptor for the enzyme is believed to be ubiquinone. This Dictyostelium discoideum (Social amoeba) protein is NADH-ubiquinone oxidoreductase chain 3 (nad3).